A 152-amino-acid polypeptide reads, in one-letter code: Deoxyuridine 5'-triphosphate nucleotidohydrolase (152 aa).

Substrate is bound by residues 72–74 (RSG), asparagine 85, and 89–91 (TID).

This sequence belongs to the dUTPase family. Mg(2+) is required as a cofactor.

The catalysed reaction is dUTP + H2O = dUMP + diphosphate + H(+). The protein operates within pyrimidine metabolism; dUMP biosynthesis; dUMP from dCTP (dUTP route): step 2/2. In terms of biological role, this enzyme is involved in nucleotide metabolism: it produces dUMP, the immediate precursor of thymidine nucleotides and it decreases the intracellular concentration of dUTP so that uracil cannot be incorporated into DNA. The sequence is that of Deoxyuridine 5'-triphosphate nucleotidohydrolase from Bradyrhizobium sp. (strain ORS 278).